Here is a 72-residue protein sequence, read N- to C-terminus: Large ribosomal subunit protein uL29 (72 aa).

Belongs to the universal ribosomal protein uL29 family.

The polypeptide is Large ribosomal subunit protein uL29 (Chlamydia caviae (strain ATCC VR-813 / DSM 19441 / 03DC25 / GPIC) (Chlamydophila caviae)).